Reading from the N-terminus, the 665-residue chain is Macrolide export ATP-binding/permease protein MacB (665 aa).

Positions 17 to 255 (MQVKGLIREF…AAQPASIIDK (239 aa)) constitute an ABC transporter domain. Residue 53–60 (GQSGSGKS) coordinates ATP. The next 4 membrane-spanning stretches (helical) occupy residues 287–307 (LLTM…VGLG), 544–564 (IAII…LVSV), 588–608 (FLIE…GLAF), and 630–650 (SIIA…FLPA).

The protein belongs to the ABC transporter superfamily. Macrolide exporter (TC 3.A.1.122) family. In terms of assembly, homodimer. Part of the tripartite efflux system MacAB-TolC, which is composed of an inner membrane transporter, MacB, a periplasmic membrane fusion protein, MacA, and an outer membrane component, TolC. The complex forms a large protein conduit and can translocate molecules across both the inner and outer membranes. Interacts with MacA.

Its subcellular location is the cell inner membrane. Functionally, part of the tripartite efflux system MacAB-TolC. MacB is a non-canonical ABC transporter that contains transmembrane domains (TMD), which form a pore in the inner membrane, and an ATP-binding domain (NBD), which is responsible for energy generation. Confers resistance against macrolides. The chain is Macrolide export ATP-binding/permease protein MacB from Psychrobacter cryohalolentis (strain ATCC BAA-1226 / DSM 17306 / VKM B-2378 / K5).